Consider the following 215-residue polypeptide: Proteasome subunit beta (215 aa).

Residues 1-12 (MLGEIQDKVYKG) constitute a propeptide, removed in mature form; by autocatalysis. The active-site Nucleophile is Thr-13.

The protein belongs to the peptidase T1B family. As to quaternary structure, the 20S proteasome core is composed of 14 alpha and 14 beta subunits that assemble into four stacked heptameric rings, resulting in a barrel-shaped structure. The two inner rings, each composed of seven catalytic beta subunits, are sandwiched by two outer rings, each composed of seven alpha subunits. The catalytic chamber with the active sites is on the inside of the barrel. Has a gated structure, the ends of the cylinder being occluded by the N-termini of the alpha-subunits. Is capped at one or both ends by the proteasome regulatory ATPase, PAN.

The protein resides in the cytoplasm. The catalysed reaction is Cleavage of peptide bonds with very broad specificity.. Its activity is regulated as follows. The formation of the proteasomal ATPase PAN-20S proteasome complex, via the docking of the C-termini of PAN into the intersubunit pockets in the alpha-rings, triggers opening of the gate for substrate entry. Interconversion between the open-gate and close-gate conformations leads to a dynamic regulation of the 20S proteasome proteolysis activity. In terms of biological role, component of the proteasome core, a large protease complex with broad specificity involved in protein degradation. This chain is Proteasome subunit beta, found in Archaeoglobus profundus (strain DSM 5631 / JCM 9629 / NBRC 100127 / Av18).